A 214-amino-acid polypeptide reads, in one-letter code: MRLRNKQWAKPLILAHPEMILVRPEKMQGHWQSRFDQARPLYLEVGSGKGQFIVEMAKTHPDRNFIALELQEAAVAMILKKQVALKLPNLQLVLGDGADLTDYFSEGEIDGLFLNFSDPWPKTRHEKRRLTYRDFLRQYQAIMKPDALLQFKTDNQGLFEYSLVSMNHFGMTFDLVSLNLHHDKRVTDNVPTEYEEKFSADGGRIYELVAHFKH.

Positions 44, 69, 96, and 118 each coordinate S-adenosyl-L-methionine. D118 is a catalytic residue. Substrate is bound at residue K122. The segment at R124–R129 is interaction with RNA. Substrate contacts are provided by residues D154 and T192–E195.

This sequence belongs to the class I-like SAM-binding methyltransferase superfamily. TrmB family.

The enzyme catalyses guanosine(46) in tRNA + S-adenosyl-L-methionine = N(7)-methylguanosine(46) in tRNA + S-adenosyl-L-homocysteine. The protein operates within tRNA modification; N(7)-methylguanine-tRNA biosynthesis. Catalyzes the formation of N(7)-methylguanine at position 46 (m7G46) in tRNA. In Lacticaseibacillus casei (strain BL23) (Lactobacillus casei), this protein is tRNA (guanine-N(7)-)-methyltransferase.